Consider the following 97-residue polypeptide: DNA-directed RNA polymerase subunit omega (97 aa).

Positions 1-16 are enriched in polar residues; sequence MSTPNALAAFNSSPSL. The interval 1 to 21 is disordered; sequence MSTPNALAAFNSSPSLNAPEG.

The protein belongs to the RNA polymerase subunit omega family. The RNAP catalytic core consists of 2 alpha, 1 beta, 1 beta' and 1 omega subunit. When a sigma factor is associated with the core the holoenzyme is formed, which can initiate transcription.

The catalysed reaction is RNA(n) + a ribonucleoside 5'-triphosphate = RNA(n+1) + diphosphate. Promotes RNA polymerase assembly. Latches the N- and C-terminal regions of the beta' subunit thereby facilitating its interaction with the beta and alpha subunits. In Saccharopolyspora erythraea (strain ATCC 11635 / DSM 40517 / JCM 4748 / NBRC 13426 / NCIMB 8594 / NRRL 2338), this protein is DNA-directed RNA polymerase subunit omega.